Consider the following 153-residue polypeptide: Calmodulin-like protein 3 (153 aa).

4 consecutive EF-hand domains span residues 1–36 (MDQA…LGIY), 37–72 (IPDK…IMEE), 74–109 (DEEE…LGLK), and 112–147 (RTLE…GGFA). Ca(2+) contacts are provided by D14, N16, D18, K20, E25, D50, N52, D54, Y56, E61, D87, N89, D91, E98, D125, D127, D129, M131, and E136.

This sequence belongs to the calmodulin family.

In terms of biological role, potential calcium sensor. This Arabidopsis thaliana (Mouse-ear cress) protein is Calmodulin-like protein 3 (CML3).